Consider the following 446-residue polypeptide: RUN domain-containing protein 3A (446 aa).

The interaction with RAP2A stretch occupies residues 1 to 298 (METSFVQTTM…LQLQLEEAAA (298 aa)). The RUN domain maps to 52–189 (DDSSEEFVNF…IDFSFCLKGE (138 aa)). Thr215 carries the phosphothreonine modification. The tract at residues 216–239 (DEEERHSAESSTSEDNSPEHPYLP) is disordered. Ser232 carries the phosphoserine modification. A coiled-coil region spans residues 267-322 (YLEELVRLRESQLKDLEAENRRLQLQLEEAAAQNQREKRELEGVILELQEQLTGLI). The segment covering 372 to 384 (PLSAEASLSSDSQ) has biased composition (polar residues). A disordered region spans residues 372 to 404 (PLSAEASLSSDSQRLGEGTRDEEPWGPIGKDPT). 2 positions are modified to phosphoserine: Ser416 and Ser419.

This sequence belongs to the RUNDC3 family. As to quaternary structure, interacts with the GTP-bound form of RAP2A.

Its function is as follows. May act as an effector of RAP2A in neuronal cells. This chain is RUN domain-containing protein 3A (RUNDC3A), found in Pongo abelii (Sumatran orangutan).